We begin with the raw amino-acid sequence, 100 residues long: Urease subunit gamma (100 aa).

It belongs to the urease gamma subunit family. As to quaternary structure, heterotrimer of UreA (gamma), UreB (beta) and UreC (alpha) subunits. Three heterotrimers associate to form the active enzyme.

It is found in the cytoplasm. The catalysed reaction is urea + 2 H2O + H(+) = hydrogencarbonate + 2 NH4(+). Its pathway is nitrogen metabolism; urea degradation; CO(2) and NH(3) from urea (urease route): step 1/1. This chain is Urease subunit gamma, found in Prochlorococcus marinus subsp. pastoris (strain CCMP1986 / NIES-2087 / MED4).